A 695-amino-acid chain; its full sequence is Putative ATP-dependent DNA helicase R568 (695 aa).

Residues Lys86–Asn499 form the UvrD-like helicase ATP-binding domain. Ala107–Thr114 provides a ligand contact to ATP.

The protein belongs to the helicase family. UvrD subfamily.

The enzyme catalyses Couples ATP hydrolysis with the unwinding of duplex DNA by translocating in the 3'-5' direction.. The catalysed reaction is ATP + H2O = ADP + phosphate + H(+). Its function is as follows. ATP-dependent DNA helicase. This is Putative ATP-dependent DNA helicase R568 from Acanthamoeba polyphaga mimivirus (APMV).